A 284-amino-acid chain; its full sequence is RCS-specific HTH-type transcriptional activator RclR (284 aa).

A disulfide bridge links Cys21 with Cys89. The region spanning 177–278 is the HTH araC/xylS-type domain; it reads PRLGAVIQQM…GCTPGEYRER (102 aa). DNA-binding regions (H-T-H motif) lie at residues 197 to 218 and 245 to 268; these read ESLA…RDVS and VVVI…VREF.

Oxydation of Cys-21 leads to partial activation of RclR, followed by the formation of an intramolecular disulfide bond between Cys-21 and Cys-89, which stabilizes the active form of RclR. Involved in reactive chlorine species (RCS) stress resistance. Up-regulates, in response to hypochlorous acid (HOCl), the expression of three genes essential for survival of RCS stress (rclA, rclB and rclC) and its own expression. The protein is RCS-specific HTH-type transcriptional activator RclR (rclR) of Escherichia coli (strain K12).